We begin with the raw amino-acid sequence, 607 residues long: Major facilitator superfamily multidrug transporter mdrA (607 aa).

A run of 12 helical transmembrane segments spans residues 77-97 (MTVA…TGGV), 110-130 (VATL…LLWA), 139-159 (QIIF…SAGA), 170-190 (FFAG…IADM), 202-222 (LFAA…GFLG), 229-249 (WVMG…TIFV), 305-325 (PIVF…YMLF), 342-362 (VSSL…TYSV), 385-405 (LPPT…FAWT), 413-433 (IVCI…FLGI), 443-463 (IFAA…GAVF), and 478-498 (WASS…FLFY). The tract at residues 523-583 (EQMKQAPEPE…ASTRTASSLR (61 aa)) is disordered. Positions 553–564 (DVSETESNVEEL) are enriched in acidic residues. Residues 572 to 583 (SRASTRTASSLR) are compositionally biased toward low complexity.

It belongs to the major facilitator superfamily. DHA1 family. Polyamines/proton antiporter (TC 2.A.1.2.16) subfamily.

The protein localises to the cell membrane. MFS transporter involved in the basal level of azole susceptibility. Confers resistance to voriconazole and, to a lesser extent, to fluconazole. This is Major facilitator superfamily multidrug transporter mdrA from Aspergillus fumigatus (strain ATCC MYA-4609 / CBS 101355 / FGSC A1100 / Af293) (Neosartorya fumigata).